The chain runs to 147 residues: Hemoglobin subunit beta (147 aa).

The 146-residue stretch at 2 to 147 (HWEDAEKQYI…ISHSLGREYH (146 aa)) folds into the Globin domain. The heme b site is built by histidine 63 and histidine 92.

Belongs to the globin family. In terms of assembly, heterotetramer of two alpha chains and two beta chains. As to expression, red blood cells.

In terms of biological role, involved in oxygen transport from the lung to the various peripheral tissues. This Lepidosiren paradoxus (South American lungfish) protein is Hemoglobin subunit beta (HBB).